Here is a 32-residue protein sequence, read N- to C-terminus: uncharacterized protein (32 aa).

This is an uncharacterized protein from Gallus gallus (Chicken).